The chain runs to 363 residues: MIDDESVPWIEKYRPKKLEDITQSQNLLDLFKNSTKKGEMTHFLFYGPPGTGKTSAILAMGREIFKEHFQNRVIEFNASDDRGINAVREKITNEAKKYVAEIKLEDGTIIPSYKIIILDEADSMTDEAQDALRVIIEQYSTATRFCFICNYITKITDAIKSRCSSVYFKKLSDECMVEKLNDISLKESMELPKNILHTIIDVSNGDMRKAIMLLQNFKYTYNFKKNLTKKLKDMTLLELKTILFMTKKSSITSTISEEDVYEISASITLDKAKGIIDDTIDCNNIVEVSNLSKKIIAMGFPIDNILTQLNKCILESNKLDVNQISKIIIYSGDILLKMKECGNEYIQLLNYLAYVNRVSKHFD.

47–54 (GPPGTGKT) provides a ligand contact to ATP.

Belongs to the activator 1 small subunits family. RfcS subfamily.

Part of the RFC clamp loader complex which loads the PCNA sliding clamp onto DNA. The polypeptide is Putative replication factor C small subunit L510 (Acanthamoeba polyphaga mimivirus (APMV)).